A 226-amino-acid chain; its full sequence is Putative methyltransferase RP459 (226 aa).

It belongs to the methyltransferase superfamily.

In Rickettsia prowazekii (strain Madrid E), this protein is Putative methyltransferase RP459.